The chain runs to 119 residues: Ribosome-binding factor A (119 aa).

It belongs to the RbfA family. In terms of assembly, monomer. Binds 30S ribosomal subunits, but not 50S ribosomal subunits or 70S ribosomes.

Its subcellular location is the cytoplasm. In terms of biological role, one of several proteins that assist in the late maturation steps of the functional core of the 30S ribosomal subunit. Associates with free 30S ribosomal subunits (but not with 30S subunits that are part of 70S ribosomes or polysomes). Required for efficient processing of 16S rRNA. May interact with the 5'-terminal helix region of 16S rRNA. This is Ribosome-binding factor A from Buchnera aphidicola subsp. Acyrthosiphon pisum (strain Tuc7).